The chain runs to 330 residues: Protein RfbI (330 aa).

The 2Fe-2S ferredoxin-type domain maps to 3-89; that stretch reads HIIKIFPSNI…ELNAHFFPEL (87 aa). The [2Fe-2S] cluster site is built by C37, C42, and C45. The FAD-binding FR-type domain occupies 94 to 192; the sequence is KKIVPCKVNS…EGPCGTFFIR (99 aa).

Requires [2Fe-2S] cluster as cofactor.

The protein operates within bacterial outer membrane biogenesis; LPS O-antigen biosynthesis. In Salmonella typhimurium (strain LT2 / SGSC1412 / ATCC 700720), this protein is Protein RfbI (rfbI).